Here is a 366-residue protein sequence, read N- to C-terminus: Ribosomal RNA large subunit methyltransferase M (366 aa).

S-adenosyl-L-methionine-binding positions include Ser188, Cys221–Gly224, Asp240, Asp260, and Asp277. The Proton acceptor role is filled by Lys306.

This sequence belongs to the class I-like SAM-binding methyltransferase superfamily. RNA methyltransferase RlmE family. RlmM subfamily. As to quaternary structure, monomer.

The protein localises to the cytoplasm. The enzyme catalyses cytidine(2498) in 23S rRNA + S-adenosyl-L-methionine = 2'-O-methylcytidine(2498) in 23S rRNA + S-adenosyl-L-homocysteine + H(+). Catalyzes the 2'-O-methylation at nucleotide C2498 in 23S rRNA. The chain is Ribosomal RNA large subunit methyltransferase M from Salmonella gallinarum (strain 287/91 / NCTC 13346).